The primary structure comprises 215 residues: Protein slowmo (215 aa).

A PRELI/MSF1 domain is found at 1–170; it reads MKIWTSEHIF…VIGLINTEVK (170 aa).

The protein belongs to the slowmo family. In terms of tissue distribution, expressed in specific tissues such as the developing central nervous system (CNS) and both the male and female germline. In the CNS, it is restricted in a subset of cells during embryogenesis and early larval development. In embryos, it is also expressed in salivary glands. In the testis, expressed in somatic cyst cells throughout the distal region where the mitotic cysts develop, extending through to meiotic cysts.

The protein resides in the mitochondrion. Its function is as follows. Required to regulate peristaltic movement and also for germline proliferation in males and females. The chain is Protein slowmo (slmo) from Drosophila melanogaster (Fruit fly).